Here is a 379-residue protein sequence, read N- to C-terminus: MAKKDYYEILGVPKTADEREIKKAYKRLAMKFHPDRNQGDKEAEAKFKEIKEAYEILTDAQKRAAYDQYGHAAFEQGGMGGGGFGGGFGNGADFSDIFGDVFGDIFGGGRGRRASRGADLRYNMELTLEEAVRGVTKEIRIPTLEECEVCHGSGAKPGSQPQTCPTCHGAGQVQMRQGFFAVQQTCPHCQGRGTLIKDPCNSCHGHGRIEKTKTLSVKIPAGVDTGDRIRLAGEGEAGEQGAPAGDLYVQVQVKQHPIFEREGNNLYCEVPINFAMAALGGEIEVPTLDGRVMLKVPSETQTGKLFRMRGKGVKSVRGGAQGDLLCRVVVETPVGLNDRQKALLQELQESFGGPTGEKNSPRSKSFFDGVKKFFDDLTR.

The J domain maps to 5 to 70; sequence DYYEILGVPK…QKRAAYDQYG (66 aa). A CR-type zinc finger spans residues 134–212; it reads GVTKEIRIPT…CHGHGRIEKT (79 aa). The Zn(2+) site is built by Cys147, Cys150, Cys164, Cys167, Cys186, Cys189, Cys200, and Cys203. 4 CXXCXGXG motif repeats span residues 147-154, 164-171, 186-193, and 200-207; these read CEVCHGSG, CPTCHGAG, CPHCQGRG, and CNSCHGHG.

The protein belongs to the DnaJ family. In terms of assembly, homodimer. It depends on Zn(2+) as a cofactor.

It localises to the cytoplasm. Its function is as follows. Participates actively in the response to hyperosmotic and heat shock by preventing the aggregation of stress-denatured proteins and by disaggregating proteins, also in an autonomous, DnaK-independent fashion. Unfolded proteins bind initially to DnaJ; upon interaction with the DnaJ-bound protein, DnaK hydrolyzes its bound ATP, resulting in the formation of a stable complex. GrpE releases ADP from DnaK; ATP binding to DnaK triggers the release of the substrate protein, thus completing the reaction cycle. Several rounds of ATP-dependent interactions between DnaJ, DnaK and GrpE are required for fully efficient folding. Also involved, together with DnaK and GrpE, in the DNA replication of plasmids through activation of initiation proteins. The chain is Chaperone protein DnaJ from Cronobacter sakazakii (strain ATCC BAA-894) (Enterobacter sakazakii).